A 501-amino-acid polypeptide reads, in one-letter code: MNRESFAAGERLVSPAYVRQGCEARRSHEHLIRLLLEKGKCPENGWDESTLELFLHELAIMDSNNFLGNCGVGEREGRVASALVARRHYRFIHGIGRSGDISAVQPKAAGSSLLNKITNSLVLDIIKLAGVHTVANCFVVPMATGMSLTLCFLTLRHKRPKAKYIIWPRIDQKSCFKSMITAGFEPVVIENVLEGDELRTDLKAVEAKVQELGPDCILCIHSTTSCFAPRVPDRLEELAVICANYDIPHIVNNAYGVQSSKCMHLIQQGARVGRIDAFVQSLDKNFMVPVGGAIIAGFNDSFIQEISKMYPGRASASPSLDVLITLLSLGSNGYKKLLKERKEMFSYLSNQIKKLSEAYNERLLHTPHNPISLAMTLKTLDEHRDKAVTQLGSMLFTRQVSGARVVPLGSMQTVSGYTFRGFMSHTNNYPCAYLNAASAIGMKMQDVDLFIKRLDRCLKAVRKERSKESDDNYDKTEDVDIEEMALKLDNVLLDTYQDASS.

The tract at residues 1-44 (MNRESFAAGERLVSPAYVRQGCEARRSHEHLIRLLLEKGKCPEN) is tetramerization. A Phosphoserine modification is found at serine 14. Position 75 (arginine 75) interacts with pyridoxal 5'-phosphate. The phosphate loop (P-loop) stretch occupies residues 96-106 (GRSGDISAVQP). Substrate is bound by residues arginine 97, serine 98, and glutamine 105. TRNA is bound at residue arginine 271. Lysine 284 carries the N6-(pyridoxal phosphate)lysine modification. Arginine 313 is a substrate binding site. TRNA-binding residues include arginine 398 and lysine 463. The tract at residues 474–493 (DKTEDVDIEEMALKLDNVLL) is SLA/LP epitope.

Belongs to the SepSecS family. As to quaternary structure, homotetramer formed by a catalytic dimer and a non-catalytic dimer serving as a binding platform that orients tRNASec for catalysis. Each tetramer binds the CCA ends of two tRNAs which point to the active sites of the catalytic dimer. Requires pyridoxal 5'-phosphate as cofactor. As to expression, primarily expressed in liver, pancreas, kidney and lung. Overexpressed in PHA-stimulated T-cells.

The protein resides in the cytoplasm. The enzyme catalyses O-phospho-L-seryl-tRNA(Sec) + selenophosphate + H2O = L-selenocysteinyl-tRNA(Sec) + 2 phosphate. It participates in aminoacyl-tRNA biosynthesis; selenocysteinyl-tRNA(Sec) biosynthesis; selenocysteinyl-tRNA(Sec) from L-seryl-tRNA(Sec) (archaeal/eukaryal route): step 2/2. Converts O-phosphoseryl-tRNA(Sec) to selenocysteinyl-tRNA(Sec) required for selenoprotein biosynthesis. The polypeptide is O-phosphoseryl-tRNA(Sec) selenium transferase (SEPSECS) (Homo sapiens (Human)).